The chain runs to 353 residues: Paraneoplastic antigen Ma1 (353 aa).

It belongs to the PNMA family. Testis- and brain-specific. In some cancer patients, specifically expressed by paraneoplastic tumor cells.

The protein resides in the nucleus. Its subcellular location is the nucleolus. The protein is Paraneoplastic antigen Ma1 (PNMA1) of Homo sapiens (Human).